The primary structure comprises 525 residues: GMP synthase [glutamine-hydrolyzing] (525 aa).

Residues 16 to 205 (PVLVVDFGAQ…LHDFAGLGAQ (190 aa)) form the Glutamine amidotransferase type-1 domain. Residue Cys93 is the Nucleophile of the active site. Residues His179 and Glu181 contribute to the active site. The GMPS ATP-PPase domain occupies 206–399 (WTPANIANAL…LGLPEEIVAR (194 aa)). 233-239 (SGGVDSA) contacts ATP.

As to quaternary structure, homodimer.

The enzyme catalyses XMP + L-glutamine + ATP + H2O = GMP + L-glutamate + AMP + diphosphate + 2 H(+). The protein operates within purine metabolism; GMP biosynthesis; GMP from XMP (L-Gln route): step 1/1. Functionally, catalyzes the synthesis of GMP from XMP. The protein is GMP synthase [glutamine-hydrolyzing] of Mycobacterium bovis (strain BCG / Pasteur 1173P2).